Reading from the N-terminus, the 285-residue chain is RNA polymerase sigma factor RpoH (285 aa).

Residues 53 to 122 (LILSHLRFVV…IHEYVLRNWR (70 aa)) form a sigma-70 factor domain-2 region. The short motif at 77 to 80 (DLVQ) is the Interaction with polymerase core subunit RpoC element. A sigma-70 factor domain-4 region spans residues 229–280 (ALASLDERSQHIVRSRWLDDDKATLQDLAEMYGVSAERIRQLEKNAMKKLKM). Residues 253–272 (LQDLAEMYGVSAERIRQLEK) constitute a DNA-binding region (H-T-H motif).

It belongs to the sigma-70 factor family. RpoH subfamily. In terms of assembly, interacts with the RNA polymerase core enzyme.

The protein localises to the cytoplasm. Sigma factors are initiation factors that promote the attachment of RNA polymerase to specific initiation sites and are then released. This sigma factor is involved in regulation of expression of heat shock genes. This is RNA polymerase sigma factor RpoH from Vibrio vulnificus (strain CMCP6).